The primary structure comprises 41 residues: Hemoglobin subunit beta (41 aa).

The region spanning 1–41 (LGNVLVCVLAHHFGKEFTPQVQAAYQKVVAGVANALAHKYH) is the Globin domain. Residue Lys39 is modified to N6-acetyllysine.

Belongs to the globin family. Heterotetramer of two alpha chains and two beta chains. Red blood cells.

Involved in oxygen transport from the lung to the various peripheral tissues. In Colobus guereza (Mantled guereza), this protein is Hemoglobin subunit beta (HBB).